A 624-amino-acid polypeptide reads, in one-letter code: Matrilin-4 (624 aa).

Residues 1-21 (MRGPCCWPLSLLLLFLQSWET) form the signal peptide. A VWFA 1 domain is found at 36–215 (DLVFMIDSSR…EFGLQFQGRL (180 aa)). N-linked (GlcNAc...) asparagine glycosylation is present at asparagine 71. EGF-like domains follow at residues 217 to 257 (GKDL…KNCL), 258 to 298 (ALDL…RSCR), 299 to 339 (AIDY…RSCR), and 340 to 380 (VRDF…KSCD). 12 cysteine pairs are disulfide-bonded: cysteine 221/cysteine 232, cysteine 228/cysteine 241, cysteine 243/cysteine 256, cysteine 262/cysteine 273, cysteine 269/cysteine 282, cysteine 284/cysteine 297, cysteine 303/cysteine 314, cysteine 310/cysteine 323, cysteine 325/cysteine 338, cysteine 344/cysteine 355, cysteine 351/cysteine 364, and cysteine 366/cysteine 379. Asparagine 307 carries an N-linked (GlcNAc...) asparagine glycan. The VWFA 2 domain maps to 388–563 (DLVLLVDGSK…STMTHLLENL (176 aa)). The stretch at 590–623 (EFQGRTLGALESLTQNLARLTERLEELENQLASR) forms a coiled coil.

As to quaternary structure, interacts with COMP. In terms of tissue distribution, lung, brain, sternum, kidney and heart.

It localises to the secreted. Functionally, major component of the extracellular matrix of cartilage. This is Matrilin-4 (Matn4) from Mus musculus (Mouse).